The following is a 508-amino-acid chain: Replication factor C large subunit (508 aa).

Position 43–50 (43–50) interacts with ATP; it reads GSPGIGKT. The disordered stretch occupies residues 425-508; sequence AVEHSGGVFE…DQQSGLSDFM (84 aa). 2 stretches are compositionally biased toward acidic residues: residues 443 to 461 and 483 to 500; these read GDSD…EESG and TTDD…DDDQ.

The protein belongs to the activator 1 small subunits family. RfcL subfamily. As to quaternary structure, heteromultimer composed of small subunits (RfcS) and large subunits (RfcL).

Its function is as follows. Part of the RFC clamp loader complex which loads the PCNA sliding clamp onto DNA. The chain is Replication factor C large subunit from Haloarcula marismortui (strain ATCC 43049 / DSM 3752 / JCM 8966 / VKM B-1809) (Halobacterium marismortui).